A 417-amino-acid polypeptide reads, in one-letter code: Serine hydroxymethyltransferase (417 aa).

Residues leucine 122 and 126 to 128 each bind (6S)-5,6,7,8-tetrahydrofolate; that span reads GHL. Lysine 230 is subject to N6-(pyridoxal phosphate)lysine. 355 to 357 serves as a coordination point for (6S)-5,6,7,8-tetrahydrofolate; that stretch reads SPF.

This sequence belongs to the SHMT family. In terms of assembly, homodimer. It depends on pyridoxal 5'-phosphate as a cofactor.

Its subcellular location is the cytoplasm. It catalyses the reaction (6R)-5,10-methylene-5,6,7,8-tetrahydrofolate + glycine + H2O = (6S)-5,6,7,8-tetrahydrofolate + L-serine. It participates in one-carbon metabolism; tetrahydrofolate interconversion. Its pathway is amino-acid biosynthesis; glycine biosynthesis; glycine from L-serine: step 1/1. Its function is as follows. Catalyzes the reversible interconversion of serine and glycine with tetrahydrofolate (THF) serving as the one-carbon carrier. This reaction serves as the major source of one-carbon groups required for the biosynthesis of purines, thymidylate, methionine, and other important biomolecules. Also exhibits THF-independent aldolase activity toward beta-hydroxyamino acids, producing glycine and aldehydes, via a retro-aldol mechanism. This is Serine hydroxymethyltransferase from Francisella philomiragia subsp. philomiragia (strain ATCC 25017 / CCUG 19701 / FSC 153 / O#319-036).